Consider the following 239-residue polypeptide: Ribose-5-phosphate isomerase A (239 aa).

Substrate-binding positions include Ser30–Thr33, Asp87–Asp90, and Lys100–Gly103. The active-site Proton acceptor is the Glu109. Lys127 is a binding site for substrate.

This sequence belongs to the ribose 5-phosphate isomerase family. Homodimer.

The catalysed reaction is aldehydo-D-ribose 5-phosphate = D-ribulose 5-phosphate. It functions in the pathway carbohydrate degradation; pentose phosphate pathway; D-ribose 5-phosphate from D-ribulose 5-phosphate (non-oxidative stage): step 1/1. Functionally, catalyzes the reversible conversion of ribose-5-phosphate to ribulose 5-phosphate. The sequence is that of Ribose-5-phosphate isomerase A from Synechococcus sp. (strain CC9605).